The primary structure comprises 155 residues: Glycosylation-dependent cell adhesion molecule 1 (155 aa).

An N-terminal signal peptide occupies residues 1 to 18 (MKFFAVLLLASLAATSLA). A glycan (O-linked (GalNAc...) threonine) is linked at T34. A phosphoserine mark is found at S48, S53, S57, S59, and S65. A disordered region spans residues 74–109 (ARRHQNQNPKLLHPVPQESSFRNTATQSEETKELTP). Residues 90 to 101 (QESSFRNTATQS) show a composition bias toward polar residues.

Belongs to the PP3/GlyCAM-1 family. Highly expressed in whey fraction of camel milk.

The chain is Glycosylation-dependent cell adhesion molecule 1 (GLYCAM1) from Camelus dromedarius (Dromedary).